Consider the following 137-residue polypeptide: Lysozyme (137 aa).

Residues 1–20 form the signal peptide; sequence MQRLLGSIVILATVFTFCEA. An I-type lysozyme domain is found at 21-135; that stretch reads TISSACLRCI…EKVHQQGCNV (115 aa). 6 disulfides stabilise this stretch: Cys-26-Cys-102, Cys-31-Cys-37, Cys-42-Cys-51, Cys-64-Cys-84, Cys-74-Cys-80, and Cys-98-Cys-116. The active-site Proton donor is Glu-34. Asp-45 acts as the Nucleophile in catalysis. 57 to 63 contacts substrate; the sequence is KENYWED. Residues Tyr-88 and 109-111 each bind substrate; that span reads HNG.

The protein belongs to the glycosyl hydrolase 22 family. Type-I lysozyme subfamily. As to expression, expressed in the basophil cells of the oyster digestive gland.

It is found in the secreted. It catalyses the reaction Hydrolysis of (1-&gt;4)-beta-linkages between N-acetylmuramic acid and N-acetyl-D-glucosamine residues in a peptidoglycan and between N-acetyl-D-glucosamine residues in chitodextrins.. Has bacteriolytic activity. May play a role in digestion and in the host defense mechanisms against invading microbes. The protein is Lysozyme (lysoz) of Magallana gigas (Pacific oyster).